The chain runs to 34 residues: Papillosin (34 aa).

Functionally, has strong antibacterial activity against the Gram-positive bacteria M.luteus, S.aureus, B.megaterium, A.viridans and E.faecalis, and against the Gram-negative bacteria K.pneumoniae, E.coli DH5alpha, S.typhimurium, P.aeruginosa and E.aerogenes. Lacks hemolytic activity against sheep erythrocytes. The chain is Papillosin from Halocynthia papillosa (Red sea-squirt).